The sequence spans 449 residues: MFS acetylaranotin efflux transporter ataA (449 aa).

The next 7 membrane-spanning stretches (helical) occupy residues 6 to 26, 45 to 65, 67 to 87, 115 to 135, 155 to 175, 182 to 202, and 227 to 247; these read SVYV…TAIP, YLLV…YFPI, WVFL…GAAP, FYIN…FLHV, LGVV…QWGG, NGRI…FLAI, and LFMT…PIWF. Residue asparagine 252 is glycosylated (N-linked (GlcNAc...) asparagine). A run of 5 helical transmembrane segments spans residues 260-280, 287-307, 321-341, 349-369, and 420-440; these read IMCL…GGGV, VPFF…MTTF, VLLG…VQAV, VGTA…VSVA, and ALVS…LGAV.

The protein belongs to the major facilitator superfamily.

Its subcellular location is the cell membrane. Efflux pump that may provide the dual role of acetylaranotin export and self-protection by allowing the fungus to evade the harmful effect of its own acetylaranotin production. This chain is MFS acetylaranotin efflux transporter ataA, found in Aspergillus terreus (strain NIH 2624 / FGSC A1156).